Here is a 2748-residue protein sequence, read N- to C-terminus: Chalcone synthase cfoA (2748 aa).

The adenylation (A) domain stretch occupies residues 13–511; sequence RHAGESCEKV…DTVPRTVIGK (499 aa). Positions 535 to 620 constitute a Carrier 1 domain; sequence DLIEALVMAE…AVSTYLHGRL (86 aa). Serine 579 carries the post-translational modification O-(pantetheine 4'-phosphoryl)serine. Residues 641–1073 form the Ketosynthase family 3 (KS3) domain; sequence VEPIAIVSMA…GTNSHIILEQ (433 aa). Active-site for beta-ketoacyl synthase activity residues include cysteine 813, histidine 948, and histidine 995. The 294-residue stretch at 1196-1489 folds into the Malonyl-CoA:ACP transacylase (MAT) domain; it reads FSGQGSWMPT…ATHGTVDKLL (294 aa). The tract at residues 1561–1842 is dehydratase (DH) domain; it reads LGHEMIFNAT…ENSFSMTMTD (282 aa). Residues 1563 to 1707 are N-terminal hotdog fold; it reads HEMIFNATSI…GTFQLISQPN (145 aa). Positions 1563-1866 constitute a PKS/mFAS DH domain; the sequence is HEMIFNATSI…LRTWQPTVAG (304 aa). Residue histidine 1595 is the Proton acceptor; for dehydratase activity of the active site. Residues 1722–1866 form a C-terminal hotdog fold region; the sequence is AESDVNISEA…LRTWQPTVAG (145 aa). The active-site Proton donor; for dehydratase activity is the aspartate 1784. One can recognise a Ketoreductase (KR) domain in the interval 2031-2210; it reads GTVLITGGTG…ALSLAWGPWA (180 aa). The Carrier 2 domain maps to 2305–2383; sequence NRHDTLLGLV…ALVEYLLPRI (79 aa). Serine 2342 is modified (O-(pantetheine 4'-phosphoryl)serine). Positions 2386 to 2426 are disordered; that stretch reads EPQPEVDTDSDASTTAGDTSVSRDSGKEDELSPSSSVTTLA. A compositionally biased stretch (low complexity) spans 2396–2407; the sequence is DASTTAGDTSVS. The tract at residues 2519 to 2742 is thioester reductase (TE) domain; it reads VGLSVYSNLA…GAAGEIERWA (224 aa).

This sequence in the N-terminal section; belongs to the NRP synthetase family. The cofactor is pantetheine 4'-phosphate.

The protein operates within secondary metabolite biosynthesis; flavonoid biosynthesis. Its function is as follows. Hybrid PKS-NRPS synthetase; part of the gene cluster that mediates the biosynthesis of chlorflavonin, a fungal flavonoid with acetolactate synthase inhibitory activity. Within the pathway, the PKS-NRPS cfoA, is responsible for the generation of the key precursor chalcone. The adenylation (A) domain activates benzoic acid or p-hydroxybenzoic acid which are transferred to the thiol group of the pantetheinyl residue of the T domain, and further transferred to the adjacent PKS portion of cfoA. Within the PKS portion of cfoA, benzoic acid or p-hydroxybenzoic acid act as starter units for respectively four malonyl-CoA molecules for elongation by the AT and KS domains. Afterwards, chalcone is cyclized through Claisen condensation and thereby released either spontaneously or catalyzed by the TE domain. Then, a new type of chalcone isomerase, cfoK, catalyzes the conversion of the chalcone into a flavanone by a histidine-mediated oxa-Michael addition mechanism. The desaturation of flavanone to flavone is catalyzed by a new type of flavone synthase, the flavin mononucleotide (FMN)-dependent oxidoreductase cfoJ. Monooxygenases cfoF, cfoG, and P450 cfoH are responsible for the hydroxylation of the flavonoid skeleton at sites C3, C8, and C2', respectively. Like cfoF, the dehydratase cfoI plays also a role in the hydroxylation of position C3. Methyltransferases cfoB, cfoC, and cfoD then catalyze the methylation of C7-OH, C8-OH, and C3-OH, respectively. Finally, the monooxygenase cfoE is responsible for the chlorination of flavonoid at position C3'. The polypeptide is Chalcone synthase cfoA (Aspergillus candidus).